The chain runs to 146 residues: Mediator of RNA polymerase II transcription subunit 10 (146 aa).

This sequence belongs to the Mediator complex subunit 10 family. In terms of assembly, component of the Mediator complex.

It is found in the nucleus. Its function is as follows. Component of the Mediator complex, a coactivator involved in the regulated transcription of nearly all RNA polymerase II-dependent genes. Mediator functions as a bridge to convey information from gene-specific regulatory proteins to the basal RNA polymerase II transcription machinery. Mediator is recruited to promoters by direct interactions with regulatory proteins and serves as a scaffold for the assembly of a functional preinitiation complex with RNA polymerase II and the general transcription factors. The sequence is that of Mediator of RNA polymerase II transcription subunit 10 (NUT2) from Scheffersomyces stipitis (strain ATCC 58785 / CBS 6054 / NBRC 10063 / NRRL Y-11545) (Yeast).